The chain runs to 46 residues: Bacteriocin acidocin 8912 (46 aa).

A propeptide spanning residues 1-20 is cleaved from the precursor; that stretch reads MISSHQKTLTDKELALISGG.

It localises to the secreted. Functionally, has a bactericidal effect on sensitive cells but not a bacteriolytic effect. The chain is Bacteriocin acidocin 8912 (acdT) from Lactobacillus acidophilus.